A 205-amino-acid chain; its full sequence is Holliday junction branch migration complex subunit RuvA (205 aa).

Positions M1–L65 are domain I. The segment at D66–S144 is domain II. The tract at residues L145–N153 is flexible linker. The domain III stretch occupies residues T154–K205.

The protein belongs to the RuvA family. As to quaternary structure, homotetramer. Forms an RuvA(8)-RuvB(12)-Holliday junction (HJ) complex. HJ DNA is sandwiched between 2 RuvA tetramers; dsDNA enters through RuvA and exits via RuvB. An RuvB hexamer assembles on each DNA strand where it exits the tetramer. Each RuvB hexamer is contacted by two RuvA subunits (via domain III) on 2 adjacent RuvB subunits; this complex drives branch migration. In the full resolvosome a probable DNA-RuvA(4)-RuvB(12)-RuvC(2) complex forms which resolves the HJ.

The protein localises to the cytoplasm. In terms of biological role, the RuvA-RuvB-RuvC complex processes Holliday junction (HJ) DNA during genetic recombination and DNA repair, while the RuvA-RuvB complex plays an important role in the rescue of blocked DNA replication forks via replication fork reversal (RFR). RuvA specifically binds to HJ cruciform DNA, conferring on it an open structure. The RuvB hexamer acts as an ATP-dependent pump, pulling dsDNA into and through the RuvAB complex. HJ branch migration allows RuvC to scan DNA until it finds its consensus sequence, where it cleaves and resolves the cruciform DNA. The chain is Holliday junction branch migration complex subunit RuvA from Orientia tsutsugamushi (strain Boryong) (Rickettsia tsutsugamushi).